Reading from the N-terminus, the 425-residue chain is Receptor-like protein 55 (425 aa).

Positions 1-25 (MKPQQPQPPLLLLLLLPLLLTTVSS) are cleaved as a signal peptide. The Extracellular segment spans residues 26 to 397 (YPLNPKQLKA…EEEHKGSNKT (372 aa)). N-linked (GlcNAc...) asparagine glycosylation is found at Asn-40, Asn-54, Asn-79, and Asn-132. LRR repeat units lie at residues 144 to 169 (LKNL…ILGN), 170 to 193 (MHKL…SFHS), 195 to 216 (LRYI…ITRL), 217 to 240 (KNLK…IKSL), 242 to 264 (FLKN…LSSI), 265 to 287 (SELT…FFSE), and 288 to 313 (MKNL…SFIK). Residues Asn-182, Asn-202, Asn-223, Asn-245, Asn-278, Asn-308, and Asn-329 are each glycosylated (N-linked (GlcNAc...) asparagine). The segment at 355-389 (PSQKEESLSGENDYDVEGGNEEKTENLKTKEEEEE) is disordered. The segment covering 374–389 (NEEKTENLKTKEEEEE) has biased composition (basic and acidic residues). An N-linked (GlcNAc...) asparagine glycan is attached at Asn-395. Residues 398–418 (LFGLGIGLFSLVFLILFLFYL) traverse the membrane as a helical segment. Over 419–425 (AKRCRLI) the chain is Cytoplasmic.

Belongs to the RLP family.

Its subcellular location is the cell membrane. Functionally, involved in plant defense. This chain is Receptor-like protein 55, found in Arabidopsis thaliana (Mouse-ear cress).